The following is a 278-amino-acid chain: Indole-3-glycerol phosphate synthase (278 aa).

This sequence belongs to the TrpC family.

It catalyses the reaction 1-(2-carboxyphenylamino)-1-deoxy-D-ribulose 5-phosphate + H(+) = (1S,2R)-1-C-(indol-3-yl)glycerol 3-phosphate + CO2 + H2O. It participates in amino-acid biosynthesis; L-tryptophan biosynthesis; L-tryptophan from chorismate: step 4/5. This chain is Indole-3-glycerol phosphate synthase, found in Pseudomonas fluorescens (strain SBW25).